Consider the following 173-residue polypeptide: Mesencephalic astrocyte-derived neurotrophic factor homolog (173 aa).

An N-terminal signal peptide occupies residues M1–A22. 4 cysteine pairs are disulfide-bonded: C28–C114, C31–C103, C61–C72, and C148–C151.

The protein belongs to the ARMET family.

The protein resides in the secreted. In terms of biological role, required during the maturation of the embryonic nervous system for maintenance of neuronal and cuticular connectivity. Essential for maintenance of dopaminergic neurons and dopamine levels. The chain is Mesencephalic astrocyte-derived neurotrophic factor homolog from Drosophila erecta (Fruit fly).